The primary structure comprises 159 residues: Glucosamine 6-phosphate N-acetyltransferase (159 aa).

S2 bears the N-acetylserine mark. D-glucosamine 6-phosphate is bound by residues T28, 86-89 (KIIH), and 98-100 (EDI). In terms of domain architecture, N-acetyltransferase spans 28-159 (TTVGTITPES…NAGVEMQIRK (132 aa)). Residues 100–102 (IAV) and 108–113 (GQGLGK) contribute to the acetyl-CoA site. Residues 129 to 130 (YK) and D134 each bind D-glucosamine 6-phosphate. Residue 143–145 (YEK) coordinates acetyl-CoA. Position 158 (R158) interacts with D-glucosamine 6-phosphate.

It belongs to the acetyltransferase family. GNA1 subfamily. Homodimer.

It carries out the reaction D-glucosamine 6-phosphate + acetyl-CoA = N-acetyl-D-glucosamine 6-phosphate + CoA + H(+). The protein operates within nucleotide-sugar biosynthesis; UDP-N-acetyl-alpha-D-glucosamine biosynthesis; N-acetyl-alpha-D-glucosamine 1-phosphate from alpha-D-glucosamine 6-phosphate (route I): step 1/2. The sequence is that of Glucosamine 6-phosphate N-acetyltransferase (GNA1) from Saccharomyces cerevisiae (strain ATCC 204508 / S288c) (Baker's yeast).